The primary structure comprises 435 residues: 3-ketoacyl-CoA thiolase (435 aa).

C98 (acyl-thioester intermediate) is an active-site residue. Residues H391 and C421 each act as proton acceptor in the active site.

Belongs to the thiolase-like superfamily. Thiolase family. Heterotetramer of two alpha chains (FadJ) and two beta chains (FadI).

The protein localises to the cytoplasm. It catalyses the reaction an acyl-CoA + acetyl-CoA = a 3-oxoacyl-CoA + CoA. It functions in the pathway lipid metabolism; fatty acid beta-oxidation. Catalyzes the final step of fatty acid oxidation in which acetyl-CoA is released and the CoA ester of a fatty acid two carbons shorter is formed. This is 3-ketoacyl-CoA thiolase from Vibrio vulnificus (strain YJ016).